The primary structure comprises 146 residues: MTVEISKVFVLMMLNLFLGASSSIWSVAPAAFQLPPCQLINQTVSLEKEGCPRCHAVETTICSGHCLTKDPIIKIPFSNVYQHVCTYRDLFYKTFEFPDCPPGVDPVVTYPVALSCHCSRCVMDTSDCTFESLQPDFCMNDIPFYY.

The signal sequence occupies residues 1 to 22; the sequence is MTVEISKVFVLMMLNLFLGASS. Intrachain disulfides connect Cys37–Cys85, Cys51–Cys100, Cys54–Cys138, Cys62–Cys116, Cys66–Cys118, and Cys121–Cys128. Residue Asn41 is glycosylated (N-linked (GlcNAc...) asparagine).

This sequence belongs to the glycoprotein hormones subunit beta family. In terms of assembly, heterodimer of an alpha and a beta chain.

It is found in the secreted. Its function is as follows. Involved in gametogenesis and steroidogenesis. The chain is Gonadotropin subunit beta-2 (cgbb) from Trichopodus trichopterus (Three spot gourami).